Here is a 375-residue protein sequence, read N- to C-terminus: MQCALYDAGRCRSCQWITQSVNEQLSAKTADLHRLLAGLPVEQWRTPIGGPEQHFRNKAKMVVSGSVEKPLFGMLHRDGTPVDLCGCPLYPASFAPVFSALKPFIARAGLTPYNVARKRGELKYLLLTESQFDGGMMLRFVLRSETKLTQLRAALPWLRAQLPQLRVITANIQPVHMAIMEGETEIYLTDQHALAERFNDVPLWIRPQSFFQTNPTVASRLYATARDWVGQLPVRHMWDLFCGVGGFGLHCATPQMQLTGIEIAPEAIACARQSAAELGLTRLHFQALDSTQFATAQGETPDLVLVNPPRRGIGKPLCDYLAQIAPRFIIYSSCNAQTMAQDIRHLPNYRIQRVQLFDMFPHTAHYEVLTLLCRL.

[4Fe-4S] cluster contacts are provided by C3, C11, C14, and C87. S-adenosyl-L-methionine contacts are provided by Q212, F241, E262, and N307. The active-site Nucleophile is C334.

The protein belongs to the class I-like SAM-binding methyltransferase superfamily. RNA M5U methyltransferase family. RlmC subfamily.

It catalyses the reaction uridine(747) in 23S rRNA + S-adenosyl-L-methionine = 5-methyluridine(747) in 23S rRNA + S-adenosyl-L-homocysteine + H(+). Functionally, catalyzes the formation of 5-methyl-uridine at position 747 (m5U747) in 23S rRNA. This chain is 23S rRNA (uracil(747)-C(5))-methyltransferase RlmC, found in Salmonella arizonae (strain ATCC BAA-731 / CDC346-86 / RSK2980).